A 61-amino-acid polypeptide reads, in one-letter code: MPNILSLTCICFNSVLCPTSFFFAKLPEAYAIFNPIVDVMPVIPVLFFLLAFVWQAAVSFR.

The propeptide occupies 1-24; that stretch reads MPNILSLTCICFNSVLCPTSFFFA. A helical transmembrane segment spans residues 32-52; sequence IFNPIVDVMPVIPVLFFLLAF.

It belongs to the PsbK family. As to quaternary structure, PSII is composed of 1 copy each of membrane proteins PsbA, PsbB, PsbC, PsbD, PsbE, PsbF, PsbH, PsbI, PsbJ, PsbK, PsbL, PsbM, PsbT, PsbX, PsbY, PsbZ, Psb30/Ycf12, at least 3 peripheral proteins of the oxygen-evolving complex and a large number of cofactors. It forms dimeric complexes.

It is found in the plastid. The protein localises to the chloroplast thylakoid membrane. In terms of biological role, one of the components of the core complex of photosystem II (PSII). PSII is a light-driven water:plastoquinone oxidoreductase that uses light energy to abstract electrons from H(2)O, generating O(2) and a proton gradient subsequently used for ATP formation. It consists of a core antenna complex that captures photons, and an electron transfer chain that converts photonic excitation into a charge separation. The chain is Photosystem II reaction center protein K from Sorghum bicolor (Sorghum).